The chain runs to 188 residues: Inosine triphosphate pyrophosphatase (188 aa).

Residue Thr-12–Lys-17 coordinates ITP. Glu-40 is a binding site for Mg(2+). ITP-binding positions include Lys-52, Asp-68 to Thr-69, Lys-85, Phe-144 to Asp-147, Lys-165, and His-170 to Arg-171.

It belongs to the HAM1 NTPase family. Homodimer. Requires Mg(2+) as cofactor. Mn(2+) is required as a cofactor.

The protein resides in the cytoplasm. It is found in the nucleus. The enzyme catalyses ITP + H2O = IMP + diphosphate + H(+). It catalyses the reaction dITP + H2O = dIMP + diphosphate + H(+). The catalysed reaction is XTP + H2O = XMP + diphosphate + H(+). In terms of biological role, pyrophosphatase that hydrolyzes non-canonical purine nucleotides such as inosine triphosphate (ITP), deoxyinosine triphosphate (dITP) or xanthosine 5'-triphosphate (XTP) to their respective monophosphate derivatives. The enzyme does not distinguish between the deoxy- and ribose forms. Probably excludes non-canonical purines from RNA and DNA precursor pools, thus preventing their incorporation into RNA and DNA and avoiding chromosomal lesions. This is Inosine triphosphate pyrophosphatase from Phaeosphaeria nodorum (strain SN15 / ATCC MYA-4574 / FGSC 10173) (Glume blotch fungus).